Reading from the N-terminus, the 195-residue chain is Coagulogen (195 aa).

The N-terminal stretch at 1–20 (MEKKLLGIAILFVTVVSVLA) is a signal peptide. Intrachain disulfides connect C28/C188, C30/C115, C80/C182, C85/C141, C95/C189, C108/C161, C147/C191, and C155/C193.

Belongs to the coagulin family. As to quaternary structure, coagulogen is cleaved after Arg-38 and Arg-66 by a clotting enzyme contained in the hemocyte and activated by a bacterial endotoxin (lipopolysaccharide). This cleavage releases the peptide C and leaves 2 chains of coagulin, A and B, linked by two disulfide bonds. Coagulin molecules interlink to form a gel. As to expression, hemolymph.

It is found in the secreted. Coagulogen is a gel-forming protein of hemolymph; it hinders the spread of invaders by immobilizing them. The polypeptide is Coagulogen (Limulus polyphemus (Atlantic horseshoe crab)).